A 102-amino-acid polypeptide reads, in one-letter code: DET1- and DDB1-associated protein 1 (102 aa).

N-acetylalanine is present on Ala-2. Residues Ser-33 and Ser-95 each carry the phosphoserine modification. The disordered stretch occupies residues 67–102 (NAAKKRDQEQVEAEGESSAPPRKVARTDSPDMPEDT).

Belongs to the DDA1 family. As to quaternary structure, component of numerous DCX (DDB1-CUL4-X-box) E3 ubiquitin-protein ligase complexes which consist of a core of DDB1, cullin-4 (CUL4A or CUL4B), DDA1 and RBX1. Component of the DCX(DCAF15) complex, also named CLR4(DCAF15) complex, composed of DCAF15, DDB1, cullin-4 (CUL4A or CUL4B), DDA1 and RBX1. Part of the DDD core complex containing DET1, DDA1 and DDB1; the DDD core complex recruits a specific UBE2E enzyme, such as UBE2E1, UBE2E2 UBE2E3, to form specific DDD-E2 complexes.

Its pathway is protein modification; protein ubiquitination. Its function is as follows. Functions as a component of numerous distinct DCX (DDB1-CUL4-X-box) E3 ubiquitin-protein ligase complexes which mediate the ubiquitination and subsequent proteasomal degradation of target proteins. In the DCX complexes, acts as a scaffolding subunit required to stabilize the complex. This Mus musculus (Mouse) protein is DET1- and DDB1-associated protein 1.